A 210-amino-acid chain; its full sequence is MADKSEMKKLLLTPVLGNNPIALQVLGVCSALAVTSQMKTAFVMTLAVTAVTAFSNLFISLIRNQIPNSVRIIAQMAVIASLVIVVDQVLKAYAYDISKQLSVFVGLIITNCIVMGRAEAYAMKSAPLPSFLDGIGNGLGYGAVLLTVATVREILGSGTWFGIELLPLVNNGGWYVPNGLLLLPPSAFFIIGLIIWGVRTKDPKQVEAKD.

5 consecutive transmembrane segments (helical) span residues 42-62 (FVMTLAVTAVTAFSNLFISLI), 72-92 (IIAQMAVIASLVIVVDQVLKA), 103-123 (VFVGLIITNCIVMGRAEAYAM), 131-151 (FLDGIGNGLGYGAVLLTVATV), and 178-198 (NGLLLLPPSAFFIIGLIIWGV).

The protein belongs to the NqrDE/RnfAE family. In terms of assembly, composed of six subunits; NqrA, NqrB, NqrC, NqrD, NqrE and NqrF.

The protein localises to the cell inner membrane. The enzyme catalyses a ubiquinone + n Na(+)(in) + NADH + H(+) = a ubiquinol + n Na(+)(out) + NAD(+). Its function is as follows. NQR complex catalyzes the reduction of ubiquinone-1 to ubiquinol by two successive reactions, coupled with the transport of Na(+) ions from the cytoplasm to the periplasm. NqrA to NqrE are probably involved in the second step, the conversion of ubisemiquinone to ubiquinol. This Aeromonas hydrophila subsp. hydrophila (strain ATCC 7966 / DSM 30187 / BCRC 13018 / CCUG 14551 / JCM 1027 / KCTC 2358 / NCIMB 9240 / NCTC 8049) protein is Na(+)-translocating NADH-quinone reductase subunit D.